Consider the following 501-residue polypeptide: Glutamyl-tRNA(Gln) amidotransferase subunit A (501 aa).

Catalysis depends on charge relay system residues Lys-84 and Ser-159. Ser-183 acts as the Acyl-ester intermediate in catalysis.

Belongs to the amidase family. GatA subfamily. In terms of assembly, heterotrimer of A, B and C subunits.

The catalysed reaction is L-glutamyl-tRNA(Gln) + L-glutamine + ATP + H2O = L-glutaminyl-tRNA(Gln) + L-glutamate + ADP + phosphate + H(+). Allows the formation of correctly charged Gln-tRNA(Gln) through the transamidation of misacylated Glu-tRNA(Gln) in organisms which lack glutaminyl-tRNA synthetase. The reaction takes place in the presence of glutamine and ATP through an activated gamma-phospho-Glu-tRNA(Gln). The chain is Glutamyl-tRNA(Gln) amidotransferase subunit A from Streptomyces avermitilis (strain ATCC 31267 / DSM 46492 / JCM 5070 / NBRC 14893 / NCIMB 12804 / NRRL 8165 / MA-4680).